Here is a 395-residue protein sequence, read N- to C-terminus: MSKRDIVLTNVTVVQLLRQPCPEPRVEAEPEPPAQPQPQPEPIKEEVPPPPPPPPAPKKVRELIVGINGFGRIGRLVLRACMEKGVKVVAVNDPFIDLEYMVYMFKYDSTHGRYKGNVEHKKGQLVVDNNEISVFQCKQPKEIPWKSVGSPFVVEATGVYLSLEETKAHIEAGAQRVVICAPSPDAPMFVMGVNEKEYNPSSMKIVSNASCTTNCLAPLAKVIHERFGILEGLMTTVHSYTATQKTVDGPSKKAWRDGRGAHQNIIPASTGAAKAVGKVIPDLKGKLTGMAFRVPTPDVSVVDLTCRLAQPTPYSAIKDAIKAAAKGPMAGILAYTEDEVVSTDFLSDTHSSIFDAKAGIALNDNFVKLISWYDNEYGYSNRVVDLVRYMFSRDK.

The interval 1 to 60 (MSKRDIVLTNVTVVQLLRQPCPEPRVEAEPEPPAQPQPQPEPIKEEVPPPPPPPPAPKKV) is testis-specific N-terminal extension. The interval 19–59 (QPCPEPRVEAEPEPPAQPQPQPEPIKEEVPPPPPPPPAPKK) is disordered. Pro residues-rich tracts occupy residues 31–41 (EPPAQPQPQPE) and 48–57 (PPPPPPPPAP). Residues 72–73 (RI), Asp93, and Lys138 each bind NAD(+). D-glyceraldehyde 3-phosphate contacts are provided by residues 210-212 (SCT), Thr241, 270-271 (TG), and Arg293. Cys211 (nucleophile) is an active-site residue. Asn375 lines the NAD(+) pocket.

Belongs to the glyceraldehyde-3-phosphate dehydrogenase family. In terms of assembly, homotetramer.

Its subcellular location is the cytoplasm. The enzyme catalyses D-glyceraldehyde 3-phosphate + phosphate + NAD(+) = (2R)-3-phospho-glyceroyl phosphate + NADH + H(+). It functions in the pathway carbohydrate degradation; glycolysis; pyruvate from D-glyceraldehyde 3-phosphate: step 1/5. In terms of biological role, may play an important role in regulating the switch between different pathways for energy production during spermiogenesis and in the spermatozoon. Required for sperm motility and male fertility. The sequence is that of Glyceraldehyde-3-phosphate dehydrogenase, testis-specific (GAPDHS) from Bos taurus (Bovine).